The primary structure comprises 417 residues: Gamma-glutamyl phosphate reductase (417 aa).

This sequence belongs to the gamma-glutamyl phosphate reductase family.

The protein resides in the cytoplasm. It catalyses the reaction L-glutamate 5-semialdehyde + phosphate + NADP(+) = L-glutamyl 5-phosphate + NADPH + H(+). Its pathway is amino-acid biosynthesis; L-proline biosynthesis; L-glutamate 5-semialdehyde from L-glutamate: step 2/2. Functionally, catalyzes the NADPH-dependent reduction of L-glutamate 5-phosphate into L-glutamate 5-semialdehyde and phosphate. The product spontaneously undergoes cyclization to form 1-pyrroline-5-carboxylate. This chain is Gamma-glutamyl phosphate reductase, found in Chlorobium phaeobacteroides (strain BS1).